A 238-amino-acid polypeptide reads, in one-letter code: Ribitol-5-phosphate cytidylyltransferase 2 (238 aa).

Residues 7–10 and 81–87 contribute to the CTP site; these read LAGG and GTDRNET.

This sequence belongs to the IspD/TarI cytidylyltransferase family. TarI subfamily.

It carries out the reaction D-ribitol 5-phosphate + CTP + H(+) = CDP-L-ribitol + diphosphate. It participates in cell wall biogenesis; poly(ribitol phosphate) teichoic acid biosynthesis. Functionally, catalyzes the transfer of the cytidylyl group of CTP to D-ribitol 5-phosphate. The polypeptide is Ribitol-5-phosphate cytidylyltransferase 2 (Staphylococcus aureus (strain MSSA476)).